The chain runs to 932 residues: Protocadherin gamma-A12 (932 aa).

The signal sequence occupies residues 1 to 29 (MIPARLHRDYKGLVLLGILLGTLWETGCT). 6 consecutive Cadherin domains span residues 30–133 (QIRY…APYF), 134–242 (RESE…APAF), 243–347 (AQPE…APEV), 348–452 (VLTS…PPVF), 453–562 (PQAS…APEI), and 570–683 (DGST…SPAN). Residues 30-692 (QIRYSVPEEL…NSETSDLTLY (663 aa)) are Extracellular-facing. N-linked (GlcNAc...) asparagine glycosylation is found at asparagine 265, asparagine 419, and asparagine 545. Residues 693 to 713 (LVVAVAAVSCVFLAFVILLLA) traverse the membrane as a helical segment. At 714 to 932 (LRLRRWHKSR…KKKSGKKEKK (219 aa)) the chain is on the cytoplasmic side. Disordered regions lie at residues 803-841 (SHGL…WPNN) and 902-932 (ATLT…KEKK). The segment covering 816-841 (WRFSQAQRPGTSGSQNGDDTGTWPNN) has biased composition (polar residues). Basic residues predominate over residues 922–932 (NKKKSGKKEKK).

It is found in the cell membrane. In terms of biological role, potential calcium-dependent cell-adhesion protein. May be involved in the establishment and maintenance of specific neuronal connections in the brain. This chain is Protocadherin gamma-A12 (PCDHGA12), found in Homo sapiens (Human).